Reading from the N-terminus, the 1331-residue chain is Xanthine dehydrogenase/oxidase (1331 aa).

In terms of domain architecture, 2Fe-2S ferredoxin-type spans 4–91 (DELVFFVNGK…HVAVTTVEGI (88 aa)). [2Fe-2S] cluster is bound by residues Cys43, Cys48, Cys51, Cys73, Cys113, Cys116, Cys148, and Cys150. The FAD-binding PCMH-type domain maps to 229-412 (FEGERVTWIQ…LSIEIPYSRE (184 aa)). FAD-binding positions include 257 to 264 (LVVGNTEI), Phe335, 345 to 349 (SIGGN), Asp358, Leu402, and Lys420. The cysteines at positions 534 and 991 are disulfide-linked. Gln766 and Phe797 together coordinate Mo-molybdopterin. Substrate contacts are provided by Glu801 and Arg879. Arg911 contributes to the Mo-molybdopterin binding site. Positions 913 and 1009 each coordinate substrate. Ala1078 is a Mo-molybdopterin binding site. The active-site Proton acceptor is Glu1260.

The protein belongs to the xanthine dehydrogenase family. As to quaternary structure, homodimer. Interacts with BTN1A1. It depends on FAD as a cofactor. Mo-molybdopterin is required as a cofactor. [2Fe-2S] cluster serves as cofactor. In terms of processing, subject to partial proteolysis; this alters the enzyme from the dehydrogenase form (D) to the oxidase form (O). Post-translationally, contains sulfhydryl groups that are easily oxidized (in vitro); this alters the enzyme from the dehydrogenase form (D) to the oxidase form (O).

Its subcellular location is the cytoplasm. It is found in the peroxisome. It localises to the secreted. The catalysed reaction is xanthine + NAD(+) + H2O = urate + NADH + H(+). It catalyses the reaction hypoxanthine + NAD(+) + H2O = xanthine + NADH + H(+). The enzyme catalyses xanthine + O2 + H2O = urate + H2O2. Can be converted from the dehydrogenase form (D) to the oxidase form (O) irreversibly by proteolysis or reversibly through the oxidation of sulfhydryl groups. In terms of biological role, key enzyme in purine degradation. Catalyzes the oxidation of hypoxanthine to xanthine. Catalyzes the oxidation of xanthine to uric acid. Contributes to the generation of reactive oxygen species. The sequence is that of Xanthine dehydrogenase/oxidase (XDH) from Felis catus (Cat).